The following is a 29-amino-acid chain: Sarcolamban B (29 aa).

Residues 7 to 27 (LFTTFLILAFLLFLLYAFYEA) form a helical membrane-spanning segment.

As to quaternary structure, interacts with SERCA. In terms of tissue distribution, strongly expressed in embryonic and larval somatic muscles and postembryonic heart.

It is found in the sarcoplasmic reticulum membrane. Its function is as follows. Plays an essential role in the regulation of calcium transport at the sarcoplasmic reticulum (SR), which is secondarily required for regular muscle contraction. The protein is Sarcolamban B of Drosophila melanogaster (Fruit fly).